The sequence spans 263 residues: Hatching enzyme 1.2 (263 aa).

The signal sequence occupies residues 1-19 (MDIRASLSILLLLFGLSQA). A propeptide spans 20–64 (SPLREFEAIFVSEPETVDITTQILETNKGSSEVLFEGDVVLPKNR) (activation peptide). One can recognise a Peptidase M12A domain in the interval 65-263 (NALICEDKSC…ILRINKLYGC (199 aa)). Disulfide bonds link C69–C74, C114–C263, and C135–C155. Residue H163 coordinates Zn(2+). The active site involves E164. Zn(2+) is bound by residues H167 and H173.

Requires Zn(2+) as cofactor. As to expression, expressed in cells of the hatching gland.

It localises to the secreted. It carries out the reaction Hydrolysis of the inner layer of fish egg envelope. Also hydrolysis of casein and small molecule substrates such as succinyl-Leu-Leu-Val-Tyr-|-7-(4-methyl)coumarylamide.. Metalloendopeptidase which participates in the breakdown of the egg envelope at the time of hatching. Cleaves the N-terminal regions of the zona pellucia glycoproteins ZP2 and ZP3, where it specifically recognizes the peptide sequences TVQQS-|-DYLIK (major site) and KLMLK-|-APEPF (minor site). The protein is Hatching enzyme 1.2 of Danio rerio (Zebrafish).